Consider the following 346-residue polypeptide: Biotin synthase (346 aa).

The Radical SAM core domain maps to 38–256 (RQVQVSTLLS…IAVARIMMPT (219 aa)). Residues C53, C57, and C60 each contribute to the [4Fe-4S] cluster site. The [2Fe-2S] cluster site is built by C97, C128, C188, and R260.

This sequence belongs to the radical SAM superfamily. Biotin synthase family. Homodimer. [4Fe-4S] cluster serves as cofactor. The cofactor is [2Fe-2S] cluster.

The catalysed reaction is (4R,5S)-dethiobiotin + (sulfur carrier)-SH + 2 reduced [2Fe-2S]-[ferredoxin] + 2 S-adenosyl-L-methionine = (sulfur carrier)-H + biotin + 2 5'-deoxyadenosine + 2 L-methionine + 2 oxidized [2Fe-2S]-[ferredoxin]. It participates in cofactor biosynthesis; biotin biosynthesis; biotin from 7,8-diaminononanoate: step 2/2. Catalyzes the conversion of dethiobiotin (DTB) to biotin by the insertion of a sulfur atom into dethiobiotin via a radical-based mechanism. This Shigella dysenteriae serotype 1 (strain Sd197) protein is Biotin synthase.